The following is a 377-amino-acid chain: GDP-mannose 3,5-epimerase (377 aa).

At G2 the chain carries N-acetylglycine. NAD(+) is bound by residues 34-60, D58, and D78; that span reads GAGG…SDWK. Residues G103 and 143–145 contribute to the substrate site; that span reads SAC. Positions 174 and 178 each coordinate NAD(+). Y174 acts as the Proton acceptor in catalysis. Residues N203, 216-218, K225, 241-243, R306, and S356 each bind substrate; these read EKA and QTR. Residue S369 is modified to Phosphoserine.

The protein belongs to the NAD(P)-dependent epimerase/dehydratase family. In terms of assembly, homodimer. Interacts with chaperone Hsc70-3 protein, which may regulate epimerase activity. The cofactor is NAD(+).

It carries out the reaction GDP-alpha-D-mannose = GDP-beta-L-gulose. The catalysed reaction is GDP-beta-L-gulose = GDP-beta-L-galactose. The protein operates within cofactor biosynthesis; L-ascorbate biosynthesis via GDP-alpha-D-mannose pathway; L-ascorbate from GDP-alpha-D-mannose: step 1/5. Inhibited by GDP and GDP-D-glucose. In terms of biological role, catalyzes a reversible epimerization of GDP-D-mannose that precedes the committed step in the biosynthesis of vitamin C (L-ascorbate), resulting in the hydrolysis of the highly energetic glycosyl-pyrophosphoryl linkage. Able to catalyze 2 distinct epimerization reactions and can release both GDP-L-galactose and GDP-L-gulose from GDP-mannose. In Arabidopsis thaliana (Mouse-ear cress), this protein is GDP-mannose 3,5-epimerase.